The primary structure comprises 361 residues: tRNA-specific 2-thiouridylase MnmA (361 aa).

ATP-binding positions include 6 to 13 (AMSGGVDS) and L32. C99 functions as the Nucleophile in the catalytic mechanism. Cysteines 99 and 196 form a disulfide. G123 is an ATP binding site. Residues 145-147 (RDQ) form an interaction with tRNA region. The active-site Cysteine persulfide intermediate is the C196.

The protein belongs to the MnmA/TRMU family.

The protein resides in the cytoplasm. It carries out the reaction S-sulfanyl-L-cysteinyl-[protein] + uridine(34) in tRNA + AH2 + ATP = 2-thiouridine(34) in tRNA + L-cysteinyl-[protein] + A + AMP + diphosphate + H(+). Functionally, catalyzes the 2-thiolation of uridine at the wobble position (U34) of tRNA, leading to the formation of s(2)U34. The protein is tRNA-specific 2-thiouridylase MnmA of Gluconobacter oxydans (strain 621H) (Gluconobacter suboxydans).